The following is a 404-amino-acid chain: Glucose-1-phosphate adenylyltransferase (404 aa).

Alpha-D-glucose 1-phosphate-binding positions include tyrosine 99, glycine 164, 179–180, and serine 197; that span reads EK.

It belongs to the bacterial/plant glucose-1-phosphate adenylyltransferase family.

It catalyses the reaction alpha-D-glucose 1-phosphate + ATP + H(+) = ADP-alpha-D-glucose + diphosphate. It functions in the pathway glycan biosynthesis; glycogen biosynthesis. Functionally, involved in the biosynthesis of ADP-glucose building block, required in the biosynthesis of maltose-1-phosphate (M1P) and in the elongation reactions to produce linear alpha-1,4-glucans. Catalyzes the reaction between ATP and alpha-D-glucose 1-phosphate (G1P) to produce pyrophosphate and ADP-Glc. This Mycolicibacterium smegmatis (strain ATCC 700084 / mc(2)155) (Mycobacterium smegmatis) protein is Glucose-1-phosphate adenylyltransferase.